We begin with the raw amino-acid sequence, 243 residues long: tRNA pseudouridine synthase A (243 aa).

The active-site Nucleophile is the Asp53. Tyr111 is a substrate binding site.

Belongs to the tRNA pseudouridine synthase TruA family. As to quaternary structure, homodimer.

The enzyme catalyses uridine(38/39/40) in tRNA = pseudouridine(38/39/40) in tRNA. Formation of pseudouridine at positions 38, 39 and 40 in the anticodon stem and loop of transfer RNAs. The chain is tRNA pseudouridine synthase A from Chlorobium chlorochromatii (strain CaD3).